A 468-amino-acid chain; its full sequence is bZIP transcription factor 14 (468 aa).

Disordered regions lie at residues 55–149 (SRRK…EGRA) and 234–272 (SPQS…LGKD). Composition is skewed to low complexity over residues 64–82 (SFVS…SSGS) and 95–106 (VTAASTESVSSS). Residues 112–128 (KKADTDDRVQRSRERNR) are compositionally biased toward basic and acidic residues. One can recognise a bZIP 1 domain in the interval 117–165 (DDRVQRSRERNRIHARKTRQRKKEQMQSLEGRATDLKHEQIRLKQIINE). The tract at residues 119-139 (RVQRSRERNRIHARKTRQRKK) is basic motif 1. The segment covering 129–138 (IHARKTRQRK) has biased composition (basic residues). The leucine-zipper 1 stretch occupies residues 145–159 (LEGRATDLKHEQIRL). A compositionally biased stretch (polar residues) spans 247–256 (ASTSDVSGDE). In terms of domain architecture, bZIP 2 spans 279-333 (EELDQIRRERNRMHAKRTRDRKRIFTEEMAEMCRILEEENHLLRVHLGGLDSDFK). The interval 285–312 (RRERNRMHAKRTRDRKRIFTEEMAEMCR) is basic motif 2. A leucine-zipper 2 region spans residues 313–320 (ILEEENHL). Residues 400–468 (ERQQREAERK…TTSLAAPVGW (69 aa)) form a disordered region. The span at 401–410 (RQQREAERKV) shows a compositional bias: basic and acidic residues. The span at 417-426 (SAASDTSTSD) shows a compositional bias: low complexity.

Belongs to the bZIP family.

It is found in the nucleus. Transcriptional activator which binds to the C-box-like motif 5'-TGACGT-3' and A-box-like motif 5'-GTACGTA-3' of target promoters to positively regulate the expression of genes involved in the tricarboxylic acid (TCA) cycle in response to nitrogen starvation. May also regulate the TCA cycle during day-to-night transitions. The polypeptide is bZIP transcription factor 14 (Phaeodactylum tricornutum (strain CCAP 1055/1)).